Consider the following 439-residue polypeptide: tRNA modification GTPase MnmE (439 aa).

(6S)-5-formyl-5,6,7,8-tetrahydrofolate-binding residues include arginine 20, glutamate 78, and lysine 116. Positions 211 to 364 (GIYVTILGEP…LLNLIKQKVE (154 aa)) constitute a TrmE-type G domain. Residues 221–226 (NSGKST), 240–246 (SEYAGTT), and 265–268 (DTAG) each bind GTP. Mg(2+)-binding residues include serine 225 and threonine 246. Lysine 439 contacts (6S)-5-formyl-5,6,7,8-tetrahydrofolate.

The protein belongs to the TRAFAC class TrmE-Era-EngA-EngB-Septin-like GTPase superfamily. TrmE GTPase family. As to quaternary structure, homodimer. Heterotetramer of two MnmE and two MnmG subunits. The cofactor is K(+).

It is found in the cytoplasm. Functionally, exhibits a very high intrinsic GTPase hydrolysis rate. Involved in the addition of a carboxymethylaminomethyl (cmnm) group at the wobble position (U34) of certain tRNAs, forming tRNA-cmnm(5)s(2)U34. In Ehrlichia chaffeensis (strain ATCC CRL-10679 / Arkansas), this protein is tRNA modification GTPase MnmE.